The primary structure comprises 510 residues: Light-independent protochlorophyllide reductase subunit B (510 aa).

D36 contributes to the [4Fe-4S] cluster binding site. D296 functions as the Proton donor in the catalytic mechanism. 431–432 serves as a coordination point for substrate; the sequence is GM.

This sequence belongs to the ChlB/BchB/BchZ family. Protochlorophyllide reductase is composed of three subunits; ChlL, ChlN and ChlB. Forms a heterotetramer of two ChlB and two ChlN subunits. [4Fe-4S] cluster serves as cofactor.

Its subcellular location is the plastid. It localises to the chloroplast. It carries out the reaction chlorophyllide a + oxidized 2[4Fe-4S]-[ferredoxin] + 2 ADP + 2 phosphate = protochlorophyllide a + reduced 2[4Fe-4S]-[ferredoxin] + 2 ATP + 2 H2O. Its pathway is porphyrin-containing compound metabolism; chlorophyll biosynthesis (light-independent). Component of the dark-operative protochlorophyllide reductase (DPOR) that uses Mg-ATP and reduced ferredoxin to reduce ring D of protochlorophyllide (Pchlide) to form chlorophyllide a (Chlide). This reaction is light-independent. The NB-protein (ChlN-ChlB) is the catalytic component of the complex. This Angiopteris evecta (Mule's foot fern) protein is Light-independent protochlorophyllide reductase subunit B.